The sequence spans 534 residues: MTDQTTRLPIRRALISVSDKTGILEFARELEALGVEILSTGGTFKLLQDNGVAAVEVADYTGFAEMMDGRVKTLHPKIHGGILGRRGIDDAIMNEHGIKPIDLVAVNLYPFEATVSKPGCDLPTAIENIDIGGPTMVRSAAKNHKDVAIVVNAGDYGQVLESLKAGGLTYAQRFDLMLKAFEHTAAYDGMIANYLGGVDQTADTLSTEGRSQFPRTFNTQFVKAQEMRYGENPHQSAAFYVEAKPAEVGIATATQLQGKELSFNNVADTDAALECVKSFVKPACVIVKHANPCGVAVCPDDEGGIRQAYELAYATDSESAFGGIIAFNRELDAATAKAIVERQFVEVIIAPSVSAEARSIIASKANVRLLTSGQWSERLPAWDYKRVNGGLLVQSRDIGMITEADLKVVTQRAPTEHEMHDLIFAWKVAKYVKSNAIVYARNRQTIGVGAGQMSRVNSARIAAIKAEHAGLQVQGAVMASDAFFPFRDGIDNAAKVGISAVIQPGGSMRDNEVIAAADEAGIAMVFTGMRHFRH.

The 146-residue stretch at 6-151 folds into the MGS-like domain; the sequence is TRLPIRRALI…KNHKDVAIVV (146 aa).

Belongs to the PurH family.

It catalyses the reaction (6R)-10-formyltetrahydrofolate + 5-amino-1-(5-phospho-beta-D-ribosyl)imidazole-4-carboxamide = 5-formamido-1-(5-phospho-D-ribosyl)imidazole-4-carboxamide + (6S)-5,6,7,8-tetrahydrofolate. The catalysed reaction is IMP + H2O = 5-formamido-1-(5-phospho-D-ribosyl)imidazole-4-carboxamide. Its pathway is purine metabolism; IMP biosynthesis via de novo pathway; 5-formamido-1-(5-phospho-D-ribosyl)imidazole-4-carboxamide from 5-amino-1-(5-phospho-D-ribosyl)imidazole-4-carboxamide (10-formyl THF route): step 1/1. It functions in the pathway purine metabolism; IMP biosynthesis via de novo pathway; IMP from 5-formamido-1-(5-phospho-D-ribosyl)imidazole-4-carboxamide: step 1/1. The chain is Bifunctional purine biosynthesis protein PurH from Pseudomonas syringae pv. tomato (strain ATCC BAA-871 / DC3000).